A 236-amino-acid polypeptide reads, in one-letter code: Probable fimbrial chaperone EcpE (236 aa).

The N-terminal stretch at 1–27 (MFRRRGVTLTKALLTAVCMLAAPLTQA) is a signal peptide.

Belongs to the EcpB/EcpE family.

Functionally, part of the ecpRABCDE operon, which encodes the E.coli common pilus (ECP). ECP is found in both commensal and pathogenic strains and plays a dual role in early-stage biofilm development and host cell recognition. The protein is Probable fimbrial chaperone EcpE (ecpE) of Escherichia coli O157:H7.